Reading from the N-terminus, the 287-residue chain is Protease HtpX homolog (287 aa).

2 consecutive transmembrane segments (helical) span residues 5 to 25 and 28 to 48; these read IRTGLLMAALTALFVAIGYWI and GAGAAIALAFAAAGNFVAYWV. His-131 is a Zn(2+) binding site. Residue Glu-132 is part of the active site. His-135 provides a ligand contact to Zn(2+). 2 helical membrane passes run 146–166 and 174–194; these read VTATLAGAIGMISNLAIFFGG and PFAGIAGLLLLLLAPLTATLV. Glu-203 serves as a coordination point for Zn(2+).

Belongs to the peptidase M48B family. The cofactor is Zn(2+).

It localises to the cell inner membrane. The chain is Protease HtpX homolog from Acidiphilium cryptum (strain JF-5).